The sequence spans 311 residues: Aspartate carbamoyltransferase catalytic subunit (311 aa).

Carbamoyl phosphate-binding residues include R55 and T56. K85 is an L-aspartate binding site. Carbamoyl phosphate contacts are provided by R106, H135, and Q138. L-aspartate-binding residues include R168 and R230. Carbamoyl phosphate-binding residues include L268 and P269.

The protein belongs to the aspartate/ornithine carbamoyltransferase superfamily. ATCase family. As to quaternary structure, heterododecamer (2C3:3R2) of six catalytic PyrB chains organized as two trimers (C3), and six regulatory PyrI chains organized as three dimers (R2).

It carries out the reaction carbamoyl phosphate + L-aspartate = N-carbamoyl-L-aspartate + phosphate + H(+). Its pathway is pyrimidine metabolism; UMP biosynthesis via de novo pathway; (S)-dihydroorotate from bicarbonate: step 2/3. Its function is as follows. Catalyzes the condensation of carbamoyl phosphate and aspartate to form carbamoyl aspartate and inorganic phosphate, the committed step in the de novo pyrimidine nucleotide biosynthesis pathway. The protein is Aspartate carbamoyltransferase catalytic subunit of Escherichia coli O139:H28 (strain E24377A / ETEC).